The sequence spans 528 residues: Light-independent protochlorophyllide reductase subunit B (528 aa).

[4Fe-4S] cluster is bound at residue Asp-36. Asp-274 functions as the Proton donor in the catalytic mechanism. Residue 409–410 coordinates substrate; sequence GL. Positions 429–471 are disordered; it reads GPSHHGGHAPKPMHDAPAASAAAGAEASMAEETAAPSQDAPAA. The span at 444–465 shows a compositional bias: low complexity; it reads APAASAAAGAEASMAEETAAPS.

Belongs to the ChlB/BchB/BchZ family. Protochlorophyllide reductase is composed of three subunits; BchL, BchN and BchB. Forms a heterotetramer of two BchB and two BchN subunits. Requires [4Fe-4S] cluster as cofactor.

The catalysed reaction is chlorophyllide a + oxidized 2[4Fe-4S]-[ferredoxin] + 2 ADP + 2 phosphate = protochlorophyllide a + reduced 2[4Fe-4S]-[ferredoxin] + 2 ATP + 2 H2O. The protein operates within porphyrin-containing compound metabolism; bacteriochlorophyll biosynthesis (light-independent). Functionally, component of the dark-operative protochlorophyllide reductase (DPOR) that uses Mg-ATP and reduced ferredoxin to reduce ring D of protochlorophyllide (Pchlide) to form chlorophyllide a (Chlide). This reaction is light-independent. The NB-protein (BchN-BchB) is the catalytic component of the complex. The protein is Light-independent protochlorophyllide reductase subunit B of Dinoroseobacter shibae (strain DSM 16493 / NCIMB 14021 / DFL 12).